Consider the following 166-residue polypeptide: Phospholipase A2 inhibitor clone 10 (166 aa).

Residues 1 to 19 form the signal peptide; the sequence is MRLILLSSLLLLGIFLANG. The C-type lectin domain occupies 46–161; that stretch reads LKYSFLTVHR…CDDNLLVVCE (116 aa). Cystine bridges form between Cys-83-Cys-160 and Cys-138-Cys-152. N-linked (GlcNAc...) asparagine glycosylation occurs at Asn-122.

This sequence belongs to the alpha-type phospholipase A2 inhibitor family. In terms of assembly, homotrimer; non-covalently linked. In terms of tissue distribution, expressed by the liver.

Its subcellular location is the secreted. In terms of biological role, this phospholipase A2 inhibitor binds directly phospholipase A2 in the presence or absence of calcium. This is Phospholipase A2 inhibitor clone 10 from Bothrops moojeni (Lance-headed viper).